A 338-amino-acid polypeptide reads, in one-letter code: Ketol-acid reductoisomerase (NADP(+)) (338 aa).

Positions 1 to 181 (MKVFYDKDCD…GGGKAGIIET (181 aa)) constitute a KARI N-terminal Rossmann domain. NADP(+) is bound by residues 24–27 (YGSQ), R47, and S52. H107 is an active-site residue. NADP(+) is bound at residue G133. The region spanning 182 to 327 (NFKEETETDL…AQLRAMMPWI (146 aa)) is the KARI C-terminal knotted domain. Residues D190, E194, E226, and E230 each contribute to the Mg(2+) site. S251 serves as a coordination point for substrate.

Belongs to the ketol-acid reductoisomerase family. Requires Mg(2+) as cofactor.

The enzyme catalyses (2R)-2,3-dihydroxy-3-methylbutanoate + NADP(+) = (2S)-2-acetolactate + NADPH + H(+). The catalysed reaction is (2R,3R)-2,3-dihydroxy-3-methylpentanoate + NADP(+) = (S)-2-ethyl-2-hydroxy-3-oxobutanoate + NADPH + H(+). The protein operates within amino-acid biosynthesis; L-isoleucine biosynthesis; L-isoleucine from 2-oxobutanoate: step 2/4. Its pathway is amino-acid biosynthesis; L-valine biosynthesis; L-valine from pyruvate: step 2/4. In terms of biological role, involved in the biosynthesis of branched-chain amino acids (BCAA). Catalyzes an alkyl-migration followed by a ketol-acid reduction of (S)-2-acetolactate (S2AL) to yield (R)-2,3-dihydroxy-isovalerate. In the isomerase reaction, S2AL is rearranged via a Mg-dependent methyl migration to produce 3-hydroxy-3-methyl-2-ketobutyrate (HMKB). In the reductase reaction, this 2-ketoacid undergoes a metal-dependent reduction by NADPH to yield (R)-2,3-dihydroxy-isovalerate. In Paracidovorax citrulli (strain AAC00-1) (Acidovorax citrulli), this protein is Ketol-acid reductoisomerase (NADP(+)).